We begin with the raw amino-acid sequence, 157 residues long: Transcriptional repressor NrdR (157 aa).

Positions 1–21 are disordered; it reads MKCPHCGNNGSRVVDSRPTDE. Residues 3-34 fold into a zinc finger; the sequence is CPHCGNNGSRVVDSRPTDEGRVIRRRRECEKC. An ATP-cone domain is found at 49–139; sequence LLVIKKNGSR…VYRQFKDMHV (91 aa).

The protein belongs to the NrdR family. Requires Zn(2+) as cofactor.

Negatively regulates transcription of bacterial ribonucleotide reductase nrd genes and operons by binding to NrdR-boxes. The sequence is that of Transcriptional repressor NrdR from Pediococcus pentosaceus (strain ATCC 25745 / CCUG 21536 / LMG 10740 / 183-1w).